Consider the following 370-residue polypeptide: Aminomethyltransferase (370 aa).

This sequence belongs to the GcvT family. The glycine cleavage system is composed of four proteins: P, T, L and H.

The enzyme catalyses N(6)-[(R)-S(8)-aminomethyldihydrolipoyl]-L-lysyl-[protein] + (6S)-5,6,7,8-tetrahydrofolate = N(6)-[(R)-dihydrolipoyl]-L-lysyl-[protein] + (6R)-5,10-methylene-5,6,7,8-tetrahydrofolate + NH4(+). The glycine cleavage system catalyzes the degradation of glycine. The protein is Aminomethyltransferase of Prochlorococcus marinus (strain MIT 9301).